The following is a 205-amino-acid chain: Outer-membrane lipoprotein LolB (205 aa).

A signal peptide spans 1–17 (MFLRHVIVFSLIALLTG). A lipid anchor (N-palmitoyl cysteine) is attached at C18. C18 is lipidated: S-diacylglycerol cysteine.

It belongs to the LolB family. In terms of assembly, monomer.

The protein resides in the cell outer membrane. In terms of biological role, plays a critical role in the incorporation of lipoproteins in the outer membrane after they are released by the LolA protein. The polypeptide is Outer-membrane lipoprotein LolB (Pseudomonas savastanoi pv. phaseolicola (strain 1448A / Race 6) (Pseudomonas syringae pv. phaseolicola (strain 1448A / Race 6))).